The sequence spans 119 residues: Basic phospholipase A2 homolog 1 (119 aa).

Cystine bridges form between Cys-11/Cys-72, Cys-27/Cys-118, Cys-29/Cys-45, Cys-44/Cys-99, Cys-51/Cys-92, Cys-61/Cys-85, and Cys-79/Cys-90. The segment at 107–117 is important for membrane-damaging activities in eukaryotes and bacteria; heparin-binding; sequence KENYNIDPKKR.

The protein belongs to the phospholipase A2 family. Group I subfamily. D49 sub-subfamily. In terms of tissue distribution, expressed by the venom gland.

The protein localises to the secreted. This Notechis scutatus scutatus (Mainland tiger snake) protein is Basic phospholipase A2 homolog 1.